The sequence spans 410 residues: Peptide chain release factor subunit 1 (410 aa).

It belongs to the eukaryotic release factor 1 family. As to quaternary structure, heterodimer of two subunits, one of which binds GTP.

It localises to the cytoplasm. In terms of biological role, directs the termination of nascent peptide synthesis (translation) in response to the termination codons UAA, UAG and UGA. This is Peptide chain release factor subunit 1 from Picrophilus torridus (strain ATCC 700027 / DSM 9790 / JCM 10055 / NBRC 100828 / KAW 2/3).